The chain runs to 150 residues: Molybdopterin synthase catalytic subunit (150 aa).

Substrate-binding positions include 37 to 39 (KVR), 103 to 104 (HR), K119, and 126 to 128 (KRE). Residue K119 forms a Glycyl lysine isopeptide (Lys-Gly) (interchain with G-Cter in MoaD) linkage.

This sequence belongs to the MoaE family. As to quaternary structure, heterotetramer of 2 MoaD subunits and 2 MoaE subunits. Also stable as homodimer. The enzyme changes between these two forms during catalysis.

The catalysed reaction is 2 [molybdopterin-synthase sulfur-carrier protein]-C-terminal-Gly-aminoethanethioate + cyclic pyranopterin phosphate + H2O = molybdopterin + 2 [molybdopterin-synthase sulfur-carrier protein]-C-terminal Gly-Gly + 2 H(+). It functions in the pathway cofactor biosynthesis; molybdopterin biosynthesis. Functionally, converts molybdopterin precursor Z to molybdopterin. This requires the incorporation of two sulfur atoms into precursor Z to generate a dithiolene group. The sulfur is provided by MoaD. The sequence is that of Molybdopterin synthase catalytic subunit (moaE) from Escherichia coli (strain K12).